Reading from the N-terminus, the 370-residue chain is 2-aminoethylphosphonate--pyruvate transaminase 2 (370 aa).

An N6-(pyridoxal phosphate)lysine modification is found at K194.

Belongs to the class-V pyridoxal-phosphate-dependent aminotransferase family. PhnW subfamily. As to quaternary structure, homodimer. Requires pyridoxal 5'-phosphate as cofactor.

The enzyme catalyses (2-aminoethyl)phosphonate + pyruvate = phosphonoacetaldehyde + L-alanine. Functionally, involved in phosphonate degradation. The chain is 2-aminoethylphosphonate--pyruvate transaminase 2 from Paraburkholderia xenovorans (strain LB400).